A 208-amino-acid chain; its full sequence is Ribosomal RNA large subunit methyltransferase E (208 aa).

Residues Gly-62, Trp-64, Asp-82, Asp-98, and Asp-123 each coordinate S-adenosyl-L-methionine. Lys-163 serves as the catalytic Proton acceptor.

It belongs to the class I-like SAM-binding methyltransferase superfamily. RNA methyltransferase RlmE family.

The protein resides in the cytoplasm. It catalyses the reaction uridine(2552) in 23S rRNA + S-adenosyl-L-methionine = 2'-O-methyluridine(2552) in 23S rRNA + S-adenosyl-L-homocysteine + H(+). Functionally, specifically methylates the uridine in position 2552 of 23S rRNA at the 2'-O position of the ribose in the fully assembled 50S ribosomal subunit. The sequence is that of Ribosomal RNA large subunit methyltransferase E from Edwardsiella ictaluri (strain 93-146).